The chain runs to 145 residues: ATP synthase epsilon chain (145 aa).

It belongs to the ATPase epsilon chain family. In terms of assembly, F-type ATPases have 2 components, CF(1) - the catalytic core - and CF(0) - the membrane proton channel. CF(1) has five subunits: alpha(3), beta(3), gamma(1), delta(1), epsilon(1). CF(0) has three main subunits: a, b and c.

It localises to the cell inner membrane. Produces ATP from ADP in the presence of a proton gradient across the membrane. This Francisella tularensis subsp. mediasiatica (strain FSC147) protein is ATP synthase epsilon chain.